Consider the following 266-residue polypeptide: 3-methyl-2-oxobutanoate hydroxymethyltransferase 2 (266 aa).

Mg(2+)-binding residues include aspartate 45 and aspartate 84. 3-methyl-2-oxobutanoate-binding positions include 45 to 46 (DS), aspartate 84, and lysine 112. Glutamate 114 serves as a coordination point for Mg(2+). Catalysis depends on glutamate 181, which acts as the Proton acceptor.

Belongs to the PanB family. In terms of assembly, homodecamer; pentamer of dimers. Mg(2+) serves as cofactor.

It is found in the cytoplasm. The catalysed reaction is 3-methyl-2-oxobutanoate + (6R)-5,10-methylene-5,6,7,8-tetrahydrofolate + H2O = 2-dehydropantoate + (6S)-5,6,7,8-tetrahydrofolate. It participates in cofactor biosynthesis; (R)-pantothenate biosynthesis; (R)-pantoate from 3-methyl-2-oxobutanoate: step 1/2. Functionally, catalyzes the reversible reaction in which hydroxymethyl group from 5,10-methylenetetrahydrofolate is transferred onto alpha-ketoisovalerate to form ketopantoate. This chain is 3-methyl-2-oxobutanoate hydroxymethyltransferase 2, found in Pseudomonas fluorescens (strain ATCC BAA-477 / NRRL B-23932 / Pf-5).